Reading from the N-terminus, the 503-residue chain is E3 ubiquitin-protein ligase IE61 (503 aa).

The segment at 19 to 58 (CAICMSAISGLGKTLPCLHDFCFVCIQTWTSTSAQCPLCR) adopts an RING-type zinc-finger fold. Disordered stretches follow at residues 175-194 (AVIT…PSSR), 367-418 (SGPI…LFVD), and 445-503 (AALP…VRRK). Residues 375–388 (GGSTSQDTSVSNIH) show a composition bias toward polar residues. Residues 389 to 403 (RSPPGGSSTQPSSGR) show a composition bias toward low complexity. Residues 404-414 (RPGRPKGVKRR) are compositionally biased toward basic residues. Residues 471 to 480 (PSTSGSSPSP) show a composition bias toward low complexity.

Interacts with host BTRC; this interaction seems to inactivate SCF-mediated protein degradation in general.

The catalysed reaction is S-ubiquitinyl-[E2 ubiquitin-conjugating enzyme]-L-cysteine + [acceptor protein]-L-lysine = [E2 ubiquitin-conjugating enzyme]-L-cysteine + N(6)-ubiquitinyl-[acceptor protein]-L-lysine.. RING-finger E3 ubiquitin ligase that degrades host SP100, one of the major components of ND10 nuclear bodies, thereby disrupting the organization of these bodies. Also plays a role in the inhibition of host NF-kappa-B pathway by blocking the SCF(BTRC)-mediated addition of ubiquitin chains to host IkappaBalpha/NFKBIA, thereby interfering with its degradation. The chain is E3 ubiquitin-protein ligase IE61 from Cercopithecine herpesvirus 9 (strain DHV) (CeHV-9).